The sequence spans 505 residues: AMP phosphorylase (505 aa).

AMP contacts are provided by residues Gly170, 196–201, and Thr205; that span reads SRAITS. Catalysis depends on Asp258, which acts as the Proton donor. Positions 266 and 290 each coordinate AMP.

Belongs to the thymidine/pyrimidine-nucleoside phosphorylase family. Type 2 subfamily.

It catalyses the reaction AMP + phosphate = alpha-D-ribose 1,5-bisphosphate + adenine. It carries out the reaction CMP + phosphate = cytosine + alpha-D-ribose 1,5-bisphosphate. The enzyme catalyses UMP + phosphate = alpha-D-ribose 1,5-bisphosphate + uracil. Its function is as follows. Catalyzes the conversion of AMP and phosphate to adenine and ribose 1,5-bisphosphate (R15P). Exhibits phosphorylase activity toward CMP and UMP in addition to AMP. Functions in an archaeal AMP degradation pathway, together with R15P isomerase and RubisCO. The protein is AMP phosphorylase of Methanococcus vannielii (strain ATCC 35089 / DSM 1224 / JCM 13029 / OCM 148 / SB).